Consider the following 645-residue polypeptide: Rab11 family-interacting protein 5 (645 aa).

The region spanning 1–146 is the C2 domain; that stretch reads MALVRDPEPA…AGRAQHTQWY (146 aa). A phosphoserine mark is found at S176, S283, S286, S307, S357, and S367. The segment at 271–299 is disordered; that stretch reads GAELLTRSPSHSSWLSTEGGRDSIQSPKL. The segment covering 277–286 has biased composition (polar residues); the sequence is RSPSHSSWLS. Residues 341–550 are disordered; it reads SHVYNEEPQP…STALSSGLER (210 aa). A compositionally biased stretch (low complexity) spans 357–374; it reads SISGPFPPSSSLHSVPPR. Residues 375 to 387 show a composition bias toward basic and acidic residues; sequence SSEEGSRSSDDSW. A phosphoserine mark is found at S391 and S395. The span at 452–463 shows a compositional bias: basic residues; the sequence is RMGLFHHHHHQG. S486, S530, S539, S545, and S640 each carry phosphoserine. The FIP-RBD domain maps to 578-640; the sequence is KDSAVLDQSA…ETSPTLLQIS (63 aa).

As to quaternary structure, interacts with RAB11FIP4. Interacts with NAPG. Interacts with RO60. Interacts with RAB11A that has been activated by GTP binding. Post-translationally, phosphorylated on serine and threonine residues. Phosphorylation at Ser-357 is PKA-dependent.

The protein resides in the cytoplasm. It localises to the recycling endosome membrane. The protein localises to the early endosome membrane. Its subcellular location is the golgi apparatus membrane. It is found in the cytoplasmic vesicle. The protein resides in the secretory vesicle membrane. It localises to the mitochondrion membrane. In terms of biological role, rab effector involved in protein trafficking from apical recycling endosomes to the apical plasma membrane. Involved in insulin granule exocytosis. May regulate V-ATPase intracellular transport in response to extracellular acidosis. The sequence is that of Rab11 family-interacting protein 5 from Mus musculus (Mouse).